Consider the following 575-residue polypeptide: Stage VI sporulation protein D (575 aa).

A disordered region spans residues 159–502 (EELSEPPAHS…ETKEPQTKES (344 aa)). A compositionally biased stretch (basic and acidic residues) spans 200–212 (GLREELETEKAES). 2 stretches are compositionally biased toward acidic residues: residues 229 to 238 (KEEEESEELA) and 249 to 264 (ETEE…EIEI). Basic and acidic residues-rich tracts occupy residues 266 to 275 (EIVKAKKETA), 283 to 302 (DVRE…HVGA), and 310 to 325 (AELH…KEET). A compositionally biased stretch (acidic residues) spans 438–448 (EEEEQEEESFE). Residues 449–464 (IEVRKTPSAEEPKEET) show a composition bias toward basic and acidic residues. A compositionally biased stretch (polar residues) spans 465–474 (PFQSFQLPES). Residues 493-502 (ETKEPQTKES) show a composition bias toward basic and acidic residues. The LysM domain occupies 523 to 567 (KICIVQQEDTIERLCERYEITSQQLIRMNSLALDDELKAGQILYI).

Its function is as follows. Required for assembly of a normal spore coat. May be a component of the innermost layer of the spore coat that aids in its adherence to the prespore. This chain is Stage VI sporulation protein D (spoVID), found in Bacillus subtilis (strain 168).